The sequence spans 450 residues: Phosphoglucosamine mutase (450 aa).

Ser102 (phosphoserine intermediate) is an active-site residue. Mg(2+) contacts are provided by Ser102, Asp244, Asp246, and Asp248. Ser102 is modified (phosphoserine).

It belongs to the phosphohexose mutase family. Requires Mg(2+) as cofactor. Activated by phosphorylation.

The catalysed reaction is alpha-D-glucosamine 1-phosphate = D-glucosamine 6-phosphate. Functionally, catalyzes the conversion of glucosamine-6-phosphate to glucosamine-1-phosphate. This Syntrophomonas wolfei subsp. wolfei (strain DSM 2245B / Goettingen) protein is Phosphoglucosamine mutase.